A 407-amino-acid chain; its full sequence is Peptidase T (407 aa).

Histidine 81 contacts Zn(2+). The active site involves aspartate 83. Position 142 (aspartate 142) interacts with Zn(2+). The Proton acceptor role is filled by glutamate 176. Zn(2+) is bound by residues glutamate 177, aspartate 199, and histidine 381.

The protein belongs to the peptidase M20B family. It depends on Zn(2+) as a cofactor.

The protein localises to the cytoplasm. The enzyme catalyses Release of the N-terminal residue from a tripeptide.. Functionally, cleaves the N-terminal amino acid of tripeptides. This Streptococcus pneumoniae (strain Hungary19A-6) protein is Peptidase T.